Reading from the N-terminus, the 425-residue chain is Glutamyl-tRNA reductase (425 aa).

Residues 49 to 52 (TCNR), serine 109, 114 to 116 (EGQ), and glutamine 120 contribute to the substrate site. Cysteine 50 acts as the Nucleophile in catalysis. Residue 189-194 (GAGETG) coordinates NADP(+).

The protein belongs to the glutamyl-tRNA reductase family. As to quaternary structure, homodimer.

The enzyme catalyses (S)-4-amino-5-oxopentanoate + tRNA(Glu) + NADP(+) = L-glutamyl-tRNA(Glu) + NADPH + H(+). It participates in porphyrin-containing compound metabolism; protoporphyrin-IX biosynthesis; 5-aminolevulinate from L-glutamyl-tRNA(Glu): step 1/2. It functions in the pathway porphyrin-containing compound metabolism; chlorophyll biosynthesis. Its function is as follows. Catalyzes the NADPH-dependent reduction of glutamyl-tRNA(Glu) to glutamate 1-semialdehyde (GSA). The protein is Glutamyl-tRNA reductase of Chlorobium phaeovibrioides (strain DSM 265 / 1930) (Prosthecochloris vibrioformis (strain DSM 265)).